The sequence spans 527 residues: Transcription factor bHLH157 (527 aa).

Disordered regions lie at residues 295 to 318 and 335 to 368; these read SGVNQSKRRKLDTSSAHSSSLFPQ and SSIGGNWKKPHEEGVKKKRAKAGESRRPRPKDRQ. The segment covering 307–318 has biased composition (polar residues); sequence TSSAHSSSLFPQ. The Nuclear localization signal motif lies at 341–348; it reads WKKPHEEG. The span at 343 to 368 shows a compositional bias: basic and acidic residues; it reads KPHEEGVKKKRAKAGESRRPRPKDRQ. The bHLH domain occupies 354-403; sequence AKAGESRRPRPKDRQMIQDRIKELRGMIPNGAKCSIDTLLDLTIKHMVFM.

Belongs to the bHLH protein family. LHW subfamily. In terms of assembly, homodimer.

It is found in the nucleus. Transcription factor that may regulate root development. The polypeptide is Transcription factor bHLH157 (BHLH157) (Arabidopsis thaliana (Mouse-ear cress)).